Reading from the N-terminus, the 192-residue chain is Imidazoleglycerol-phosphate dehydratase (192 aa).

It belongs to the imidazoleglycerol-phosphate dehydratase family.

The protein localises to the cytoplasm. It catalyses the reaction D-erythro-1-(imidazol-4-yl)glycerol 3-phosphate = 3-(imidazol-4-yl)-2-oxopropyl phosphate + H2O. Its pathway is amino-acid biosynthesis; L-histidine biosynthesis; L-histidine from 5-phospho-alpha-D-ribose 1-diphosphate: step 6/9. This chain is Imidazoleglycerol-phosphate dehydratase, found in Staphylococcus aureus (strain bovine RF122 / ET3-1).